A 448-amino-acid chain; its full sequence is N-succinylarginine dihydrolase (448 aa).

Substrate is bound by residues 19–28, asparagine 110, and 137–138; these read GGLSYGNVAS and HR. Glutamate 174 is an active-site residue. Arginine 214 is a binding site for substrate. The active site involves histidine 250. Substrate-binding residues include aspartate 252 and asparagine 365. Residue cysteine 371 is the Nucleophile of the active site.

This sequence belongs to the succinylarginine dihydrolase family. In terms of assembly, homodimer.

The enzyme catalyses N(2)-succinyl-L-arginine + 2 H2O + 2 H(+) = N(2)-succinyl-L-ornithine + 2 NH4(+) + CO2. Its pathway is amino-acid degradation; L-arginine degradation via AST pathway; L-glutamate and succinate from L-arginine: step 2/5. Catalyzes the hydrolysis of N(2)-succinylarginine into N(2)-succinylornithine, ammonia and CO(2). This chain is N-succinylarginine dihydrolase, found in Pseudomonas aeruginosa (strain UCBPP-PA14).